We begin with the raw amino-acid sequence, 141 residues long: Auxin-responsive protein SAUR63 (141 aa).

The protein belongs to the ARG7 family. As to expression, expressed in hypocotyls, cotyledons, petioles, young rosette leaves, apical portion of inflorescence stems, stamen filaments and petals.

It is found in the cell membrane. Its function is as follows. May promote auxin-stimulated organ elongation, such as hypocotyls, stamen filaments and petals. This is Auxin-responsive protein SAUR63 from Arabidopsis thaliana (Mouse-ear cress).